Here is a 156-residue protein sequence, read N- to C-terminus: MPRRREVPKREILPDPKFGSVELAKFMNVVMLDGKKAVAERIIYGALEQVQVKTGKDAIEVFNLAINNIKPIVEVKSRRVGGANYQVPVEVRPVRRLALAMRWLREAAKKRGEKSMDLRLAGELIDASEGRGAAMKKREDTHKMAEANKAFSHFRW.

Belongs to the universal ribosomal protein uS7 family. As to quaternary structure, part of the 30S ribosomal subunit. Contacts proteins S9 and S11.

One of the primary rRNA binding proteins, it binds directly to 16S rRNA where it nucleates assembly of the head domain of the 30S subunit. Is located at the subunit interface close to the decoding center, probably blocks exit of the E-site tRNA. The polypeptide is Small ribosomal subunit protein uS7 (Bordetella bronchiseptica (strain ATCC BAA-588 / NCTC 13252 / RB50) (Alcaligenes bronchisepticus)).